Here is a 448-residue protein sequence, read N- to C-terminus: Glutamate--tRNA ligase (448 aa).

A 'HIGH' region motif is present at residues 10–20; the sequence is PSPTGFLHIGN. A 'KMSKS' region motif is present at residues 214 to 218; it reads KLSKR. Residue Lys-217 participates in ATP binding.

It belongs to the class-I aminoacyl-tRNA synthetase family. Glutamate--tRNA ligase type 1 subfamily. Monomer.

It is found in the cytoplasm. The catalysed reaction is tRNA(Glu) + L-glutamate + ATP = L-glutamyl-tRNA(Glu) + AMP + diphosphate. Catalyzes the attachment of glutamate to tRNA(Glu) in a two-step reaction: glutamate is first activated by ATP to form Glu-AMP and then transferred to the acceptor end of tRNA(Glu). The polypeptide is Glutamate--tRNA ligase (Phytoplasma australiense).